Consider the following 175-residue polypeptide: MIKKVPVLLFFMASISITHASQTATKSLGVSITLSKAQCKINNRAGISGSFVLPMISTSGQIISSKKFTTVPIIIDCTAGGNVNQLEITFGDNSSKKIDSTTWYTTNKDLGLRFSWTKDKTQGFNLGVAHNINKSIWLEGNKKFNASVDVSPVVIRNTVQGGQYTSALPVTVTFI.

The first 20 residues, 1–20 (MIKKVPVLLFFMASISITHA), serve as a signal peptide directing secretion. Cys39 and Cys77 form a disulfide bridge.

The protein localises to the fimbrium. In terms of biological role, involved in the biosynthesis of K99 fimbriae. The protein is Protein FanH (fanH) of Escherichia coli.